Reading from the N-terminus, the 465-residue chain is Ubiquitin carboxyl-terminal hydrolase UCH54 (465 aa).

The UCH catalytic domain maps to Glu11 to Lys333. Cys145 serves as the catalytic Nucleophile. The active-site Proton donor is His220. Residues Ile244–Ile293 form a disordered region. The span at Lys251–Asn292 shows a compositional bias: low complexity. One can recognise a ULD domain in the interval Asn432–Lys460.

This sequence belongs to the peptidase C12 family.

The enzyme catalyses Thiol-dependent hydrolysis of ester, thioester, amide, peptide and isopeptide bonds formed by the C-terminal Gly of ubiquitin (a 76-residue protein attached to proteins as an intracellular targeting signal).. Its function is as follows. Thiol protease that recognizes and hydrolyzes a peptide bond at the C-terminal glycine of either ubiquitin or NEDD8. This is Ubiquitin carboxyl-terminal hydrolase UCH54 from Plasmodium falciparum (isolate 3D7).